The primary structure comprises 866 residues: Pentatricopeptide repeat-containing protein At1g15510, chloroplastic (866 aa).

The transit peptide at 1-52 directs the protein to the chloroplast; that stretch reads MASSAQSPHFYLNPGKSNSFQSKAYKQRNVNFYWNFGIRRLFLRKSQGLSVL. 18 PPR repeats span residues 58–92, 93–123, 128–158, 159–194, 195–229, 230–260, 261–295, 296–330, 331–365, 366–396, 397–431, 432–466, 467–493, 497–531, 532–561, 562–596, 597–631, and 632–662; these read STHF…RVAV, DEDV…ALSS, GVEL…MSER, NLFS…GVKP, DVYT…GYEL, DIDV…MPRR, DIIS…SVDP, DLMT…GFAV, DISV…DIVS, WTTM…SVKP, DEIT…RLIS, YVIV…NVIS, WTSI…MKMT, NAIT…GVGL, DDFL…SQKK, DVTS…RVRP, DEIT…GVTP, and NLKH…MPVT. A type E motif region spans residues 667-742; the sequence is VWGALLNACR…DAGCSWVEVK (76 aa). The interval 743 to 773 is type E(+) motif; the sequence is GKVHAFLSDDKYHPQTKEINTVLEGFYEKMS. The interval 774-866 is type DYW motif; the sequence is EVGLTKISES…FKDGECSCGD (93 aa).

This sequence belongs to the PPR family. PCMP-H subfamily.

The protein resides in the plastid. Its subcellular location is the chloroplast. Its function is as follows. Regulates the RNA editing of the chloroplast transcript accD, and is essential for the early stages of chloroplast biogenesis. Required for the RNA editing of the chloroplast transcript ndhF. The protein is Pentatricopeptide repeat-containing protein At1g15510, chloroplastic (PCMP-H73) of Arabidopsis thaliana (Mouse-ear cress).